A 1057-amino-acid chain; its full sequence is QLSYGYDEKSAGGISVPGPMGPSGPRGLPGPPGAPGPQGFQGPPGEPGEPGASGPMGPRGPPGPPGKNGDDGEAGKPGRPGERGPPGPQGARGLPGTAGLPGMKGHRGFSGLDGAKGDAGPAGPKGEPGSPGENGAPGQMGPRGLPGERGRPGAPGPAGARGNDGATGAAGPPGPTGPAGPPGFPGAVGAKGEAGPQGARGSEGPQGVRGEPGPPGPAGAAGPAGNPGADGQPGAKGANGAPGIAGAPGFPGARGPAGPQGPSGAPGPKGNSGEPGAPGSKGDAGAKGEPGPIGIQGPPGPAGEEGKRGARGEPGPTGLPGPPGERGGPGSRGFPGADGVAGPKGPAGERGSPGPAGPKGSPGEAGRPGEAGLPGAKGLTGSPGSPGPDGKTGPPGPAGQDGRPGPPGPPGARGQAGVMGFPGPKGAAGEPGKAGERGVPGPPGAVGAAGKDGEAGAQGPPGPAGPAGERGEQGPAGSPGFQGLPGPAGPPGEAGKPGEQGVPGDLGAPGPSGARGERGFPGERGVQGPPGPAGPRGSNGAPGNDGAKGDAGAPGAPGSQGAPGLQGMPGERGAAGLPGPKGDRGDAGPKGADGSPGKDGPRGLTGPIGPPGPAGAPGDKGEAGPSGPAGPTGARGAPGDRGEPGPPGPAGFAGPPGADGQPGAKGEPGDAGAKGDAGPPGPAGPTGAPGPIGNVGAPGAKGARGSAGPPGATGFPGAAGRVGPPGPSGNAGPPGPPGPAGKEGGKGPRGETGPAGRPGEVGPPGPPGPAGEKGSPGADGPAGAPGTPGPQGIGGQRGVVGLPGQRGERGFPGLPGPSGEPGKQGPSGSSGERGPPGPAGPPGLAGPPGESGREGAPGAEGSPGRDGSPGPKGDRGETGPSGPPGAPGAPGAPGPVGPAGKSGDRGETGPAGPAGPAGPAGVRGPAGPQGPRGDKGETGEQGDRGLKGHRGFSGLQGPPGPPGSPGEQGPSGASGPAGPRGPPGSAGAPGKDGLNGLPGPPGPPGPRGRTGDAGPVGPPGPPGPPGPPGPPSGAFDFSFLPQPPQEKAHDGGRYYRA.

A Pyrrolidone carboxylic acid modification is found at Gln1. The span at Gln1–Ser10 shows a compositional bias: basic and acidic residues. The nonhelical region (N-terminal) stretch occupies residues Gln1 to Pro17. Residues Gln1–Ala1057 are disordered. Lys9 carries the post-translational modification Allysine. At Ser10 the chain carries Phosphoserine. Collagen-like domains follow at residues Gly18–Lys76, Gly75–Asn134, Gly135–Glu193, and Gly195–Gly252. The interval Gly18–Pro1031 is triple-helical region. 4-hydroxyproline is present on residues Pro29, Pro32, Pro35, Pro44, Pro47, Pro50, Pro65, Pro80, Pro86, Pro95, and Pro101. Positions Pro37 to Met56 are enriched in low complexity. The segment covering Asn68–Glu82 has biased composition (basic and acidic residues). Lys104 is subject to 5-hydroxylysine; alternate. Lys104 carries O-linked (Gal...) hydroxylysine; alternate glycosylation. At Ser110 the chain carries Phosphoserine. Residues Asp118–Asn134 are compositionally biased toward low complexity. Pro128, Pro131, Pro137, Pro146, and Pro152 each carry 4-hydroxyproline. Positions Pro157–Ala170 are enriched in low complexity. The span at Pro172 to Phe184 shows a compositional bias: pro residues. 4-hydroxyproline occurs at positions 173, 182, 185, 212, 215, 227, 233, 242, 248, 251, and 266. Positions Ala218–Lys269 are enriched in low complexity. 5-hydroxylysine is present on Lys269. 10 positions are modified to 4-hydroxyproline: Pro275, Pro278, Pro290, Pro292, Pro299, Pro314, Pro320, Pro323, Pro329, and Pro335. A compositionally biased stretch (low complexity) spans Lys287–Gln296. Over residues Gly324–Gly333 the composition is skewed to gly residues. 5-hydroxylysine is present on Lys344. 4-hydroxyproline is present on residues Pro353, Pro362, Pro368, Pro374, Pro383, Pro386, Pro395, Pro404, Pro410, Pro422, Pro431, Pro440, Pro443, Pro461, Pro479, Pro485, Pro491, Pro497, Pro503, Pro509, Pro521, Pro530, Pro542, Pro554, Pro557, Pro563, Pro569, and Pro578. The span at Lys377–Arg403 shows a compositional bias: low complexity. The segment covering Ala412 to Pro431 has biased composition (low complexity). The segment covering Gln473–Gln500 has biased composition (low complexity). 2 Collagen-like domains span residues Gly522–Gly579 and Gly555–Pro613. The span at Asn539–Gln566 shows a compositional bias: low complexity. Lys590 is modified (5-hydroxylysine). 4-hydroxyproline occurs at positions 596, 611, and 617. 2 Collagen-like domains span residues Gly618–Asp676 and Gly678–Pro736. The segment covering Ala623–Ala637 has biased composition (low complexity). Residue Ser626 is modified to Phosphoserine. Pro638, Pro644, Pro647, Pro656, Pro662, Pro680, Pro689, and Pro698 each carry 4-hydroxyproline. Positions Ala650–Ala677 are enriched in low complexity. Lys701 is modified (5-hydroxylysine). Positions Ser706–Val722 are enriched in low complexity. Residues Pro710 and Pro716 each carry the 4-hydroxyproline modification. A 3-hydroxyproline modification is found at Pro724. 4-hydroxyproline occurs at positions 725, 734, 737, 758, 764, 767, 776, and 785. The segment covering Glu751–Glu760 has biased composition (low complexity). The span at Ala770 to Pro785 shows a compositional bias: low complexity. Residues Gly789 to Gly798 show a composition bias toward gly residues. 10 positions are modified to 4-hydroxyproline: Pro803, Pro812, Pro815, Pro821, Pro836, Pro842, Pro848, Pro857, Pro863, and Pro869. The Collagen-like 9 domain maps to Gly804–Gly861. A compositionally biased stretch (pro residues) spans Pro835 to Ala845. Lys872 carries the 5-hydroxylysine modification. The span at Ser881 to Val896 shows a compositional bias: pro residues. 3 positions are modified to 4-hydroxyproline: Pro884, Pro887, and Pro890. Positions Ala917–Pro931 are enriched in low complexity. Collagen-like domains are found at residues Gly918–Pro976 and Gly972–Pro1030. Over residues Arg932–Leu946 the composition is skewed to basic and acidic residues. Position 935 is a 5-hydroxylysine (Lys935). At Lys947 the chain carries 5-hydroxylysine; alternate. Lys947 is a glycosylation site (O-linked (Gal...) hydroxylysine; alternate). 4-hydroxyproline occurs at positions 959, 962, 965, 983, 998, and 1001. The span at Pro965–Leu997 shows a compositional bias: low complexity. Pro1003 carries the 3-hydroxyproline modification. Residue Pro1004 is modified to 4-hydroxyproline. Residues Val1016–Pro1031 show a composition bias toward pro residues. 3-hydroxyproline is present on Pro1018. Pro1019 is modified (4-hydroxyproline). Residue Pro1021 is modified to 3-hydroxyproline. Pro1022 carries the 4-hydroxyproline modification. Pro1024 is subject to 3-hydroxyproline. 4-hydroxyproline is present on residues Pro1025, Pro1028, and Pro1031. The segment at Ser1032–Tyr1055 is nonhelical region (C-terminal). Positions Glu1046–Ala1057 are enriched in basic and acidic residues. Lys1047 is subject to Allysine.

The protein belongs to the fibrillar collagen family. Trimers of one alpha 2(I) and two alpha 1(I) chains. Contains mostly 4-hydroxyproline. Proline residues at the third position of the tripeptide repeating unit (G-X-Y) are hydroxylated in some or all of the chains. In terms of processing, contains 3-hydroxyproline at a few sites. This modification occurs on the first proline residue in the sequence motif Gly-Pro-Hyp, where Hyp is 4-hydroxyproline. Post-translationally, lysine residues at the third position of the tripeptide repeating unit (G-X-Y) are 5-hydroxylated in some or all of the chains. O-glycosylated on hydroxylated lysine residues. The O-linked glycan consists of a Glc-Gal disaccharide.

The protein resides in the secreted. It is found in the extracellular space. Its subcellular location is the extracellular matrix. Type I collagen is a member of group I collagen (fibrillar forming collagen). The protein is Collagen alpha-1(I) chain (COL1A1) of Mammut americanum (American mastodon).